Reading from the N-terminus, the 929-residue chain is Dual specificity protein phosphatase PHS1 (929 aa).

2 disordered regions span residues 1-27 (MAEPEKKRDQPFSQEKDEEKDLYLVHD) and 545-618 (PESP…SLSS). Composition is skewed to basic and acidic residues over residues 552-580 (HGHEVNHYPSPSKDRVPSDNSSDHSESDM) and 591-606 (ENKEDGSSPKSRESWH). In terms of domain architecture, Tyrosine-protein phosphatase spans 703-848 (KPSMIQENLF…LINLDKKCHG (146 aa)). C792 serves as the catalytic Phosphocysteine intermediate. 792–798 (CFEGRSR) serves as a coordination point for substrate. The Nuclear export signal signature appears at 903 to 911 (QKALEALKL).

In terms of assembly, interacts with MPK18. Expressed in roots, leaves and flowers.

Its subcellular location is the cytoplasm. It catalyses the reaction O-phospho-L-seryl-[protein] + H2O = L-seryl-[protein] + phosphate. The catalysed reaction is O-phospho-L-threonyl-[protein] + H2O = L-threonyl-[protein] + phosphate. It carries out the reaction O-phospho-L-tyrosyl-[protein] + H2O = L-tyrosyl-[protein] + phosphate. Functionally, probable dual specificity phosphatase that binds and dephosphorylates MPK18, modulating the organization and dynamics of cortical microtubules. Acts as a negative regulator of abscisic acid (ABA) signaling during seed germination and light-induced stomata aperture. The sequence is that of Dual specificity protein phosphatase PHS1 (PHS1) from Arabidopsis thaliana (Mouse-ear cress).